Here is a 559-residue protein sequence, read N- to C-terminus: AP-4 complex accessory subunit tepsin (559 aa).

The region spanning leucine 2–histidine 135 is the ENTH domain. Disordered stretches follow at residues proline 131–leucine 157, alanine 214–aspartate 290, and proline 472–alanine 491. Low complexity-rich tracts occupy residues glutamine 144–alanine 154 and serine 266–serine 281. The span at proline 472–threonine 485 shows a compositional bias: polar residues.

It localises to the golgi apparatus. It is found in the trans-Golgi network membrane. The protein resides in the cytoplasmic vesicle. Its subcellular location is the cytoplasm. The protein localises to the cytosol. Functionally, may play a role in vesicular trafficking of proteins at the trans-Golgi network. This Xenopus laevis (African clawed frog) protein is AP-4 complex accessory subunit tepsin.